An 852-amino-acid polypeptide reads, in one-letter code: Metastasis-associated in colon cancer protein 1 (852 aa).

Residue S19 is modified to Phosphoserine. The region spanning 212–349 (VTIACKVNHQ…LSQVMYLVVA (138 aa)) is the ZU5 domain. Positions 549–619 (NFSNYGVTLK…HCKNVKVISK (71 aa)) constitute an SH3 domain.

In terms of assembly, interacts with FASLG. In terms of tissue distribution, preferentially expressed in metastasizing tumors.

The protein resides in the cytoplasm. It is found in the nucleus. Acts as a transcription activator for MET and as a key regulator of HGF-MET signaling. Promotes cell motility, proliferation and hepatocyte growth factor (HGF)-dependent scattering in vitro and tumor growth and metastasis in vivo. The polypeptide is Metastasis-associated in colon cancer protein 1 (MACC1) (Homo sapiens (Human)).